The sequence spans 411 residues: LL-diaminopimelate aminotransferase (411 aa).

Residues tyrosine 15 and glycine 42 each coordinate substrate. Residues tyrosine 72, 108–109 (SK), tyrosine 132, asparagine 187, tyrosine 218, and 246–248 (SFS) each bind pyridoxal 5'-phosphate. Lysine 109, tyrosine 132, and asparagine 187 together coordinate substrate. An N6-(pyridoxal phosphate)lysine modification is found at lysine 249. Arginine 257 and asparagine 292 together coordinate pyridoxal 5'-phosphate. Substrate contacts are provided by asparagine 292 and arginine 388.

This sequence belongs to the class-I pyridoxal-phosphate-dependent aminotransferase family. LL-diaminopimelate aminotransferase subfamily. Homodimer. Requires pyridoxal 5'-phosphate as cofactor.

The enzyme catalyses (2S,6S)-2,6-diaminopimelate + 2-oxoglutarate = (S)-2,3,4,5-tetrahydrodipicolinate + L-glutamate + H2O + H(+). It participates in amino-acid biosynthesis; L-lysine biosynthesis via DAP pathway; LL-2,6-diaminopimelate from (S)-tetrahydrodipicolinate (aminotransferase route): step 1/1. Involved in the synthesis of meso-diaminopimelate (m-DAP or DL-DAP), required for both lysine and peptidoglycan biosynthesis. Catalyzes the direct conversion of tetrahydrodipicolinate to LL-diaminopimelate. This Nostoc punctiforme (strain ATCC 29133 / PCC 73102) protein is LL-diaminopimelate aminotransferase.